The following is a 360-amino-acid chain: Heme A synthase (360 aa).

The next 5 membrane-spanning stretches (helical) occupy residues 13–33, 99–119, 129–149, 160–180, and 199–219; these read AVRWWLISVAALIALMVLVGG, LLGRFIGVAYLLPFLFFLWRG, LWLLFALGGLQGAVGWWMVAS, YRLATHLVLALLIFAGIVWTV, and SALLLVVTFVQIYLGALVAGL. Heme is bound at residue His-263. The next 3 helical transmembrane spans lie at 265–282, 292–312, and 315–335; these read MTAYALFVLAALHAFDAV, GALWLFAAVSLQAVLGILTLL, and VPIGLALAHQAVAIAVLTLAV. His-323 lines the heme pocket.

It belongs to the COX15/CtaA family. Type 2 subfamily. As to quaternary structure, interacts with CtaB. Heme b is required as a cofactor.

It localises to the cell membrane. The catalysed reaction is Fe(II)-heme o + 2 A + H2O = Fe(II)-heme a + 2 AH2. It participates in porphyrin-containing compound metabolism; heme A biosynthesis; heme A from heme O: step 1/1. Its function is as follows. Catalyzes the conversion of heme O to heme A by two successive hydroxylations of the methyl group at C8. The first hydroxylation forms heme I, the second hydroxylation results in an unstable dihydroxymethyl group, which spontaneously dehydrates, resulting in the formyl group of heme A. The sequence is that of Heme A synthase from Bradyrhizobium diazoefficiens (strain JCM 10833 / BCRC 13528 / IAM 13628 / NBRC 14792 / USDA 110).